Consider the following 468-residue polypeptide: Glutamate--tRNA ligase (468 aa).

The 'HIGH' region motif lies at 14 to 24; that stretch reads PSPTGFIHLGN. The short motif at 246–250 is the 'KMSKS' region element; sequence KMSKR. Lys249 is a binding site for ATP.

Belongs to the class-I aminoacyl-tRNA synthetase family. Glutamate--tRNA ligase type 1 subfamily. In terms of assembly, monomer.

Its subcellular location is the cytoplasm. It catalyses the reaction tRNA(Glu) + L-glutamate + ATP = L-glutamyl-tRNA(Glu) + AMP + diphosphate. In terms of biological role, catalyzes the attachment of glutamate to tRNA(Glu) in a two-step reaction: glutamate is first activated by ATP to form Glu-AMP and then transferred to the acceptor end of tRNA(Glu). The sequence is that of Glutamate--tRNA ligase from Leptothrix cholodnii (strain ATCC 51168 / LMG 8142 / SP-6) (Leptothrix discophora (strain SP-6)).